The primary structure comprises 1325 residues: RIMS-binding protein 2 (1325 aa).

The interval 153–181 (TFLSKSRSDTPRCRFDSDMDNDQNSNTSK) is disordered. A compositionally biased stretch (basic and acidic residues) spans 158-169 (SRSDTPRCRFDS). Residues 186-253 (GKVHLCIARY…PSNFVDFVQD (68 aa)) enclose the SH3 1 domain. Fibronectin type-III domains follow at residues 315–408 (VPYP…GKDV), 411–493 (APSN…KKEA), and 507–608 (PPQD…VPPS). Disordered stretches follow at residues 601-778 (SDLL…GSDL), 988-1010 (DLGS…KKYE), and 1040-1090 (AAGP…SRPM). Basic and acidic residues predominate over residues 627–641 (ETKEEHLGPHLKIDE). Positions 664–676 (FPSSLQGRRSPSP) are enriched in polar residues. Residues 696–716 (MAREAAQRVAESNRMERRSVF) show a composition bias toward basic and acidic residues. Over residues 717 to 727 (SERSNAAQYAN) the composition is skewed to polar residues. Basic and acidic residues-rich tracts occupy residues 763 to 774 (CHGEDYHTESSR) and 996 to 1010 (PRSE…KKYE). SH3 domains are found at residues 1121–1189 (ISTR…EIQA) and 1225–1292 (VSTR…EVPD).

Belongs to the RIMBP family. In terms of assembly, interacts with RIMS1, RIMS2, CACNA1D and CACNA1B, and potentially with other Ca(2+) channel alpha-1 isoforms. Brain, cochlea and retina.

It localises to the cell membrane. The protein localises to the synapse. Its function is as follows. Plays a role in the synaptic transmission as bifunctional linker that interacts simultaneously with RIMS1, RIMS2, CACNA1D and CACNA1B. This chain is RIMS-binding protein 2 (RIMBP2), found in Gallus gallus (Chicken).